The sequence spans 143 residues: Transcriptional regulator MraZ (143 aa).

SpoVT-AbrB domains follow at residues 5–47 (EFEH…PLSE) and 76–119 (AVQC…NKAR).

Belongs to the MraZ family. Forms oligomers.

The protein localises to the cytoplasm. It localises to the nucleoid. This Pediococcus pentosaceus (strain ATCC 25745 / CCUG 21536 / LMG 10740 / 183-1w) protein is Transcriptional regulator MraZ.